The following is a 396-amino-acid chain: Elongation factor Tu (396 aa).

The region spanning 11 to 205 (KPHVNIGTIG…TVDEYIPTPE (195 aa)) is the tr-type G domain. Residues 20 to 27 (GHVDHGKT) are G1. Position 20-27 (20-27 (GHVDHGKT)) interacts with GTP. T27 is a Mg(2+) binding site. The G2 stretch occupies residues 61–65 (GITIN). Residues 82-85 (DAPG) are G3. Residues 82–86 (DAPGH) and 137–140 (NKVD) contribute to the GTP site. A G4 region spans residues 137–140 (NKVD). A G5 region spans residues 175–177 (SAL).

It belongs to the TRAFAC class translation factor GTPase superfamily. Classic translation factor GTPase family. EF-Tu/EF-1A subfamily. Monomer.

Its subcellular location is the cytoplasm. It catalyses the reaction GTP + H2O = GDP + phosphate + H(+). Its function is as follows. GTP hydrolase that promotes the GTP-dependent binding of aminoacyl-tRNA to the A-site of ribosomes during protein biosynthesis. This is Elongation factor Tu from Lactobacillus gasseri (strain ATCC 33323 / DSM 20243 / BCRC 14619 / CIP 102991 / JCM 1131 / KCTC 3163 / NCIMB 11718 / NCTC 13722 / AM63).